The primary structure comprises 37 residues: Large ribosomal subunit protein bL36c (37 aa).

Belongs to the bacterial ribosomal protein bL36 family.

Its subcellular location is the plastid. It localises to the chloroplast. This chain is Large ribosomal subunit protein bL36c, found in Lactuca sativa (Garden lettuce).